The sequence spans 367 residues: Tubulin-like protein CetZ (367 aa).

Residues Gln-11–Arg-15, Ser-111, Gly-115–Gly-117, Glu-148, Asn-176, and Asn-194 each bind GTP.

Belongs to the CetZ family.

It is found in the cytoplasm. Involved in cell shape control. The polypeptide is Tubulin-like protein CetZ (Methanothrix thermoacetophila (strain DSM 6194 / JCM 14653 / NBRC 101360 / PT) (Methanosaeta thermophila)).